A 3718-amino-acid chain; its full sequence is Laminin subunit alpha-5 (3718 aa).

A signal peptide spans 1–40; the sequence is MAKRGGQLCAGSAPGALGPRSPAPRPLLLLLAGLALVGEA. One can recognise a Laminin N-terminal domain in the interval 46–304; the sequence is DGFSLHPPYF…SIKDISIGGR (259 aa). N-linked (GlcNAc...) asparagine glycosylation is found at N100, N148, and N248. Disulfide bonds link C305–C314, C307–C327, C329–C338, C341–C361, C364–C373, C366–C398, C401–C410, C413–C431, C434–C445, C436–C452, C454–C463, and C466–C476. Laminin EGF-like domains lie at 305-363, 364-433, and 434-479; these read CVCH…ECQS, CNCH…VCRP, and CDCE…CYPL. The N-linked (GlcNAc...) asparagine glycan is linked to N383. N457 carries N-linked (GlcNAc...) asparagine glycosylation. Residue N485 is glycosylated (N-linked (GlcNAc...) asparagine). 29 disulfides stabilise this stretch: C500-C512, C502-C521, C523-C532, C535-C544, C547-C559, C549-C566, C568-C577, C580-C590, C593-C605, C595-C611, C613-C622, C625-C635, C638-C650, C640-C656, C658-C667, C670-C680, C683-C695, C685-C702, C704-C713, C716-C731, C752-C761, C764-C779, C782-C796, C784-C802, C804-C813, C816-C831, C834-C846, C836-C853, and C855-C864. Laminin EGF-like domains follow at residues 500–546, 547–592, 593–637, 638–682, 683–728, 729–781, and 782–833; these read CDCN…SCHP, CQCS…LCQL, CGCS…DCHA, CACD…SCIP, CHCS…YCEA, GSCH…GCTR, and CSCD…GCRS. The Laminin EGF-like 11; truncated domain occupies 834–855; sequence CRCDVGGALGQGCEPKTGACRC. The domain IV 1 (domain IV B) stretch occupies residues 856-1442; the sequence is RPNTQGPTCS…SLFYNNGALP (587 aa). N-linked (GlcNAc...) asparagine glycans are attached at residues N905, N926, and N964. A disordered region spans residues 1253–1284; that stretch reads LTQSQELSPGAPPEGPQPRPPTAVDPNAEPTL. A compositionally biased stretch (pro residues) spans 1262–1275; it reads GAPPEGPQPRPPTA. A glycan (N-linked (GlcNAc...) asparagine) is linked at N1335. 16 cysteine pairs are disulfide-bonded: C1443-C1455, C1445-C1462, C1464-C1473, C1476-C1486, C1489-C1496, C1491-C1503, C1505-C1514, C1517-C1530, C1533-C1548, C1535-C1555, C1557-C1566, C1569-C1579, C1582-C1594, C1584-C1601, C1603-C1612, and C1615-C1630. Laminin EGF-like domains follow at residues 1443–1488, 1489–1532, 1533–1581, and 1582–1632; these read CGCH…NCRP, CDCG…GCEE, CNCS…SCRP, and CDCH…GCTR. N1534 is a glycosylation site (N-linked (GlcNAc...) asparagine). A Laminin EGF-like 16; first part domain is found at 1633-1642; that stretch reads CFCFGATERC. The region spanning 1646–1831 is the Laminin IV type A domain; that stretch reads NLARHEFVDM…RGPPASNVEL (186 aa). 2 short sequence motifs (cell attachment site) span residues 1723–1725 and 1839–1841; these read RGD. The Laminin EGF-like 16; second part domain maps to 1832–1864; that stretch reads CMCPANYRGDSCQECAPGYYRDTKGLFLGRCVP. 24 cysteine pairs are disulfide-bonded: C1865-C1874, C1867-C1881, C1884-C1893, C1896-C1912, C1915-C1930, C1917-C1939, C1941-C1950, C1953-C1968, C1971-C1986, C1973-C1993, C1996-C2005, C2008-C2022, C2025-C2035, C2027-C2042, C2044-C2053, C2056-C2069, C2072-C2083, C2074-C2090, C2092-C2101, C2104-C2116, C2119-C2126, C2121-C2133, C2135-C2144, and C2147-C2166. 6 consecutive Laminin EGF-like domains span residues 1865-1914, 1915-1970, 1971-2024, 2025-2071, 2072-2118, and 2119-2168; these read CQCH…PCVS, CPCP…SCQP, CDCS…NCTR, CDCS…GCRP, CACG…GCRR, and CQCP…HCEV. N-linked (GlcNAc...) asparagine glycosylation occurs at N2021. Positions 2169-2735 are domain II and I; it reads CDHCVVLLLD…AQARSAASKV (567 aa). N-linked (GlcNAc...) asparagine glycans are attached at residues N2198, N2211, N2365, N2395, N2425, N2503, and N2570. Coiled coils occupy residues 2205 to 2257 and 2330 to 2464; these read ARLH…SQAT and TRDL…ASLD. Coiled coils occupy residues 2604 to 2621 and 2639 to 2705; these read ARKN…AMLA and AEAL…LENR. Residue N2709 is glycosylated (N-linked (GlcNAc...) asparagine). Laminin G-like domains are found at residues 2736 to 2933, 2947 to 3119, 3128 to 3296, 3337 to 3511, and 3518 to 3689; these read KVSM…DKPC, GSYL…SFGC, TMTF…SVGC, AYQF…VTPC, and DGLF…MRGC. Intrachain disulfides connect C2903-C2933 and C3094-C3119. N-linked (GlcNAc...) asparagine glycosylation is found at N3111, N3213, N3261, and N3291. Cystine bridges form between C3265–C3296 and C3488–C3511. 2 N-linked (GlcNAc...) asparagine glycosylation sites follow: N3623 and N3673. Cysteines 3661 and 3689 form a disulfide.

In terms of assembly, laminin is a complex glycoprotein, consisting of three different polypeptide chains (alpha, beta, gamma), which are bound to each other by disulfide bonds into a cross-shaped molecule comprising one long and three short arms with globules at each end. Alpha-5 is a subunit of laminin-10 (laminin-511), laminin-11 (laminin-521) and laminin-15 (laminin-523). In adult, high levels in heart, lung, and kidney; lower in brain, muscle and testis; very low in liver, gut and skin.

Its subcellular location is the secreted. The protein resides in the extracellular space. It localises to the extracellular matrix. It is found in the basement membrane. Binding to cells via a high affinity receptor, laminin is thought to mediate the attachment, migration and organization of cells into tissues during embryonic development by interacting with other extracellular matrix components. Alpha-5 may be the major laminin alpha chain of adult epithelial and/or endothelial basal laminae. Plays a role in the regulation of skeletogenesis, through a mechanism that involves integrin-mediated signaling and PTK2B/PYK2. This is Laminin subunit alpha-5 (Lama5) from Mus musculus (Mouse).